A 123-amino-acid chain; its full sequence is Small ribosomal subunit protein uS12 (123 aa).

D89 bears the 3-methylthioaspartic acid mark.

This sequence belongs to the universal ribosomal protein uS12 family. In terms of assembly, part of the 30S ribosomal subunit. Contacts proteins S8 and S17. May interact with IF1 in the 30S initiation complex.

Functionally, with S4 and S5 plays an important role in translational accuracy. Its function is as follows. Interacts with and stabilizes bases of the 16S rRNA that are involved in tRNA selection in the A site and with the mRNA backbone. Located at the interface of the 30S and 50S subunits, it traverses the body of the 30S subunit contacting proteins on the other side and probably holding the rRNA structure together. The combined cluster of proteins S8, S12 and S17 appears to hold together the shoulder and platform of the 30S subunit. The sequence is that of Small ribosomal subunit protein uS12 from Citrifermentans bemidjiense (strain ATCC BAA-1014 / DSM 16622 / JCM 12645 / Bem) (Geobacter bemidjiensis).